The chain runs to 453 residues: Bifunctional protein GlmU (453 aa).

Residues 1 to 225 (MNIVILAAGT…EWETLGVNSK (225 aa)) form a pyrophosphorylase region. Residues 6-9 (LAAG), lysine 20, glutamine 71, 76-77 (GT), 98-100 (YGD), glycine 135, glutamate 150, asparagine 165, and asparagine 223 each bind UDP-N-acetyl-alpha-D-glucosamine. Aspartate 100 lines the Mg(2+) pocket. Residue asparagine 223 coordinates Mg(2+). Positions 226–246 (QQLAELERIHQHNVADALLVA) are linker. The N-acetyltransferase stretch occupies residues 247–453 (GVTLADPARL…GYVRPTKKKS (207 aa)). UDP-N-acetyl-alpha-D-glucosamine-binding residues include arginine 329 and lysine 347. Histidine 359 (proton acceptor) is an active-site residue. 2 residues coordinate UDP-N-acetyl-alpha-D-glucosamine: tyrosine 362 and asparagine 373. Acetyl-CoA contacts are provided by residues alanine 376, 382-383 (NY), serine 401, and alanine 419.

The protein in the N-terminal section; belongs to the N-acetylglucosamine-1-phosphate uridyltransferase family. This sequence in the C-terminal section; belongs to the transferase hexapeptide repeat family. Homotrimer. It depends on Mg(2+) as a cofactor.

The protein localises to the cytoplasm. The catalysed reaction is alpha-D-glucosamine 1-phosphate + acetyl-CoA = N-acetyl-alpha-D-glucosamine 1-phosphate + CoA + H(+). It catalyses the reaction N-acetyl-alpha-D-glucosamine 1-phosphate + UTP + H(+) = UDP-N-acetyl-alpha-D-glucosamine + diphosphate. It functions in the pathway nucleotide-sugar biosynthesis; UDP-N-acetyl-alpha-D-glucosamine biosynthesis; N-acetyl-alpha-D-glucosamine 1-phosphate from alpha-D-glucosamine 6-phosphate (route II): step 2/2. The protein operates within nucleotide-sugar biosynthesis; UDP-N-acetyl-alpha-D-glucosamine biosynthesis; UDP-N-acetyl-alpha-D-glucosamine from N-acetyl-alpha-D-glucosamine 1-phosphate: step 1/1. It participates in bacterial outer membrane biogenesis; LPS lipid A biosynthesis. Its function is as follows. Catalyzes the last two sequential reactions in the de novo biosynthetic pathway for UDP-N-acetylglucosamine (UDP-GlcNAc). The C-terminal domain catalyzes the transfer of acetyl group from acetyl coenzyme A to glucosamine-1-phosphate (GlcN-1-P) to produce N-acetylglucosamine-1-phosphate (GlcNAc-1-P), which is converted into UDP-GlcNAc by the transfer of uridine 5-monophosphate (from uridine 5-triphosphate), a reaction catalyzed by the N-terminal domain. The chain is Bifunctional protein GlmU from Paraburkholderia phytofirmans (strain DSM 17436 / LMG 22146 / PsJN) (Burkholderia phytofirmans).